Consider the following 798-residue polypeptide: Putative antiporter subunit mnhA2 (798 aa).

21 helical membrane passes run methionine 1–leucine 21, isoleucine 33–methionine 53, glycine 78–alanine 98, leucine 109–alanine 129, isoleucine 133–tryptophan 153, phenylalanine 167–valine 187, phenylalanine 209–phenylalanine 229, threonine 241–phenylalanine 261, phenylalanine 272–alanine 292, alanine 300–glycine 320, methionine 337–phenylalanine 357, valine 381–phenylalanine 401, isoleucine 431–isoleucine 451, proline 472–isoleucine 492, glycine 526–leucine 546, isoleucine 593–phenylalanine 613, glycine 625–isoleucine 645, leucine 649–methionine 669, leucine 674–serine 694, alanine 710–alanine 730, and isoleucine 766–leucine 786.

The protein belongs to the CPA3 antiporters (TC 2.A.63) subunit A family. May form a heterooligomeric complex that consists of seven subunits: mnhA2, mnhB2, mnhC2, mnhD2, mnhE2, mnhF2 and mnhG2.

The protein resides in the cell membrane. This Staphylococcus saprophyticus subsp. saprophyticus (strain ATCC 15305 / DSM 20229 / NCIMB 8711 / NCTC 7292 / S-41) protein is Putative antiporter subunit mnhA2 (mnhA2).